The sequence spans 794 residues: Hyaluronan mediated motility receptor (794 aa).

The tract at residues 1–87 (MSFPKAPLKR…SQKNDKDVKR (87 aa)) is disordered. Residue S20 is modified to Phosphoserine. Residues 74–87 (SKKDSQKNDKDVKR) are compositionally biased toward basic and acidic residues. N134, N279, N446, N467, N488, N509, N530, N561, and N601 each carry an N-linked (GlcNAc...) asparagine glycan. Positions 365 to 630 (EEMTSEKNVF…ITDLKNQLRQ (266 aa)) are required for interaction with FAM83D. 5 consecutive repeat copies span residues 442-462 (QEKY…LESV), 463-483 (QEKY…LESE), 484-504 (QEKY…LESE), 505-525 (QEKY…LESV), and 526-546 (QEKY…LESY). Residues 442–546 (QEKYNDTAQS…RDVTAQLESY (105 aa)) are 5 X 21 AA tandem repeats. Hyaluronic acid-binding regions lie at residues 719 to 729 (KQKIKHVVKLK) and 741 to 750 (KLRSQLVKRK). Position 784 is a phosphothreonine (T784).

In terms of assembly, interacts with ANKRD26. Interacts with DYNLL1. Interacts with FAM83D/CHICA. In terms of tissue distribution, ubiquitously expressed.

The protein localises to the cell surface. Its subcellular location is the cytoplasm. The protein resides in the cytoskeleton. It is found in the spindle. In terms of biological role, receptor for hyaluronic acid (HA). Involved in cell motility. When hyaluronan binds to HMMR, the phosphorylation of a number of proteins, including the PTK2/FAK1 occurs. May also be involved in cellular transformation and metastasis formation, and in regulating extracellular-regulated kinase (ERK) activity. May act as a regulator of adipogenesis. The sequence is that of Hyaluronan mediated motility receptor (Hmmr) from Mus musculus (Mouse).